Reading from the N-terminus, the 389-residue chain is tRNA-specific 2-thiouridylase MnmA (389 aa).

ATP contacts are provided by residues 35–42 (GMSGGVDS) and Met-61. Positions 121 to 123 (NPD) are interaction with target base in tRNA. Cys-126 serves as the catalytic Nucleophile. The cysteines at positions 126 and 223 are disulfide-linked. Gly-151 serves as a coordination point for ATP. Residues 173–175 (KDQ) form an interaction with tRNA region. Catalysis depends on Cys-223, which acts as the Cysteine persulfide intermediate. The segment at 335–336 (RY) is interaction with tRNA.

Belongs to the MnmA/TRMU family.

It localises to the cytoplasm. It carries out the reaction S-sulfanyl-L-cysteinyl-[protein] + uridine(34) in tRNA + AH2 + ATP = 2-thiouridine(34) in tRNA + L-cysteinyl-[protein] + A + AMP + diphosphate + H(+). Functionally, catalyzes the 2-thiolation of uridine at the wobble position (U34) of tRNA, leading to the formation of s(2)U34. This chain is tRNA-specific 2-thiouridylase MnmA, found in Actinobacillus pleuropneumoniae serotype 3 (strain JL03).